The primary structure comprises 248 residues: DNA repair protein RecO (248 aa).

The protein belongs to the RecO family.

Involved in DNA repair and RecF pathway recombination. The sequence is that of DNA repair protein RecO from Bacillus cereus (strain B4264).